We begin with the raw amino-acid sequence, 367 residues long: Outer membrane porin C (367 aa).

The signal sequence occupies residues 1–21 (MKVKVLSLLVPALLVAGAANA). Topologically, residues 22–33 (AEVYNKDGNKLD) are periplasmic. The beta stranded transmembrane segment at 34 to 42 (LYGKVDGLH) threads the bilayer. Over 43–53 (YFSDNKDVDGD) the chain is Extracellular. The beta stranded transmembrane segment at 54-63 (QTYMRLGFKG) threads the bilayer. The Periplasmic segment spans residues 64 to 73 (ETQVTDQLTG). The chain crosses the membrane as a beta stranded span at residues 74-84 (YGQWEYQIQGN). At 85–91 (SAENENN) the chain is on the extracellular side. Residues 92–101 (SWTRVAFAGL) form a beta stranded membrane-spanning segment. At 102–106 (KFQDV) the chain is on the periplasmic side. Residues 107 to 115 (GSFDYGRNY) traverse the membrane as a beta stranded segment. The interval 116–133 (GVVYDVTSWTDVLPEFGG) is loop L3; may constrict the pore. Residues 116–141 (GVVYDVTSWTDVLPEFGGDTYGSDNF) lie on the Extracellular side of the membrane. Residues 142–154 (MQQRGNGFATYRN) form a beta stranded membrane-spanning segment. The Periplasmic portion of the chain corresponds to 155–163 (TDFFGLVDG). A beta stranded membrane pass occupies residues 164 to 171 (LNFAVQYQ). Residues 172–200 (GKNGNPSGEGFTSGVTNNGRDALRQNGDG) are Extracellular-facing. The chain crosses the membrane as a beta stranded span at residues 201–207 (VGGSITY). Over 208–211 (DYEG) the chain is Periplasmic. A beta stranded transmembrane segment spans residues 212 to 219 (FGIGGAIS). Residues 220-241 (SSKRTDAQNTAAYIGNGDRAET) lie on the Extracellular side of the membrane. A beta stranded transmembrane segment spans residues 242-248 (YTGGLKY). Over 249–252 (DANN) the chain is Periplasmic. A beta stranded transmembrane segment spans residues 253–260 (IYLAAQYT). At 261-269 (QTYNATRVG) the chain is on the extracellular side. The chain crosses the membrane as a beta stranded span at residues 270–286 (SLGWANKAQNFEAVAQY). Residues 287 to 291 (QFDFG) are Periplasmic-facing. The beta stranded transmembrane segment at 292–299 (LRPSLAYL) threads the bilayer. Residues 300-318 (QSKGKNLGRGYDDEDILKY) are Extracellular-facing. Residues 319–326 (VDVGATYY) form a beta stranded membrane-spanning segment. Residues 327–330 (FNKN) are Periplasmic-facing. A beta stranded transmembrane segment spans residues 331–338 (MSTYVDYK). Residues 339–358 (INLLDDNQFTRDAGINTDNI) lie on the Extracellular side of the membrane. Positions 340, 342, and 355 each coordinate Mg(2+). The chain crosses the membrane as a beta stranded span at residues 359–366 (VALGLVYQ). Residue F367 is a topological domain, periplasmic.

This sequence belongs to the Gram-negative porin family. In terms of assembly, homotrimer. Forms mixed heterotrimers with OmpF and with PhoE; other mixed heterotrimers are also probable.

It localises to the cell outer membrane. In terms of biological role, forms pores that allow passive diffusion of small molecules across the outer membrane. Its function is as follows. (Microbial infection) Supports colicin E5 entry in the absence of its major receptor OmpF. Functionally, (Microbial infection) A mixed OmpC-OmpF heterotrimer is the outer membrane receptor for toxin CdiA-EC536; polymorphisms in extracellular loops 4 and 5 of OmpC confer susceptibility to CdiA-EC536-mediated toxicity. The chain is Outer membrane porin C (ompC) from Escherichia coli (strain K12).